The primary structure comprises 306 residues: MIFQRTVKEMVKTTGVGLHSGNKVTLSIKPAPVNTGIVLVRTDLEPAVAIPAKADLVRETTMCTALVNDEGVRISTIEHLFAALAGLGIDNAVIEVDAPEIPIMDGSASPWVFLLQSVGIQEQASAKKYLRIKNTVRVEDGDKWAELKPFKGFRVDFAIDFNHPEIARSQQHMVMDFSTSAFVRDISRARTFGFMRDIEYLRANNLALGGSMENAVVLDEYRVLNPDGLRYEDEFVKHKILDAFGDLYVAGYAIVGEFCAFKTGHALNNQLVRALLAQQDAWELVSFEKDEAPVSFSVPTGAAVFT.

Residues H79, H238, and D242 each contribute to the Zn(2+) site. Catalysis depends on H265, which acts as the Proton donor.

The protein belongs to the LpxC family. Requires Zn(2+) as cofactor.

It carries out the reaction a UDP-3-O-[(3R)-3-hydroxyacyl]-N-acetyl-alpha-D-glucosamine + H2O = a UDP-3-O-[(3R)-3-hydroxyacyl]-alpha-D-glucosamine + acetate. It functions in the pathway glycolipid biosynthesis; lipid IV(A) biosynthesis; lipid IV(A) from (3R)-3-hydroxytetradecanoyl-[acyl-carrier-protein] and UDP-N-acetyl-alpha-D-glucosamine: step 2/6. Catalyzes the hydrolysis of UDP-3-O-myristoyl-N-acetylglucosamine to form UDP-3-O-myristoylglucosamine and acetate, the committed step in lipid A biosynthesis. This Shewanella sediminis (strain HAW-EB3) protein is UDP-3-O-acyl-N-acetylglucosamine deacetylase.